We begin with the raw amino-acid sequence, 183 residues long: MTSFPHPSTSESGPDPDSEPNREEQAHAYCLRLLTARARTRAELSGKLTQRGYDEPVVARVLDRLVEVGLVDDEDFAEQWVRSRHLYAGKGKRALAAELRRKGVDDEVISSSLADIDAGAERDRAERLVRDRLRREKLDDEPGSDLKVKRRMAGMLARRGYSQSMALDVVTVELAGERERRRV.

Residues 1-12 are compositionally biased toward polar residues; the sequence is MTSFPHPSTSES. The disordered stretch occupies residues 1–26; it reads MTSFPHPSTSESGPDPDSEPNREEQA.

This sequence belongs to the RecX family.

The protein resides in the cytoplasm. Functionally, modulates RecA activity. In Mycobacterium sp. (strain JLS), this protein is Regulatory protein RecX.